A 189-amino-acid chain; its full sequence is UPF0149 protein VFMJ11_2207 (189 aa).

The protein belongs to the UPF0149 family.

This Aliivibrio fischeri (strain MJ11) (Vibrio fischeri) protein is UPF0149 protein VFMJ11_2207.